Reading from the N-terminus, the 208-residue chain is Uracil phosphoribosyltransferase (208 aa).

5-phospho-alpha-D-ribose 1-diphosphate is bound by residues Arg78, Arg103, and 130–138; that span reads DPMLATANS. Uracil-binding positions include Ile193 and 198 to 200; that span reads GDA. Residue Asp199 coordinates 5-phospho-alpha-D-ribose 1-diphosphate.

It belongs to the UPRTase family. Requires Mg(2+) as cofactor.

The enzyme catalyses UMP + diphosphate = 5-phospho-alpha-D-ribose 1-diphosphate + uracil. Its pathway is pyrimidine metabolism; UMP biosynthesis via salvage pathway; UMP from uracil: step 1/1. Its activity is regulated as follows. Allosterically activated by GTP. Catalyzes the conversion of uracil and 5-phospho-alpha-D-ribose 1-diphosphate (PRPP) to UMP and diphosphate. The protein is Uracil phosphoribosyltransferase of Brucella abortus biovar 1 (strain 9-941).